Consider the following 272-residue polypeptide: Putative hydro-lyase RPB_3621 (272 aa).

This sequence belongs to the D-glutamate cyclase family.

The protein is Putative hydro-lyase RPB_3621 of Rhodopseudomonas palustris (strain HaA2).